The primary structure comprises 447 residues: Adenylosuccinate synthetase (447 aa).

GTP is bound by residues 12-18 (GDEGKGK) and 40-42 (GHT). D13 acts as the Proton acceptor in catalysis. Residues D13 and G40 each coordinate Mg(2+). IMP-binding positions include 13-16 (DEGK), 38-41 (NAGH), T128, R142, Q223, T238, and R302. The Proton donor role is filled by H41. 298-304 (TTTGRKR) is a substrate binding site. Residues R304, 330-332 (KLD), and 412-414 (SLG) contribute to the GTP site.

The protein belongs to the adenylosuccinate synthetase family. In terms of assembly, homodimer. The cofactor is Mg(2+).

It is found in the cytoplasm. It catalyses the reaction IMP + L-aspartate + GTP = N(6)-(1,2-dicarboxyethyl)-AMP + GDP + phosphate + 2 H(+). It participates in purine metabolism; AMP biosynthesis via de novo pathway; AMP from IMP: step 1/2. Plays an important role in the de novo pathway of purine nucleotide biosynthesis. Catalyzes the first committed step in the biosynthesis of AMP from IMP. This chain is Adenylosuccinate synthetase, found in Nostoc punctiforme (strain ATCC 29133 / PCC 73102).